A 137-amino-acid polypeptide reads, in one-letter code: Glutamate mutase sigma subunit (137 aa).

Residues 3 to 137 form the B12-binding domain; the sequence is KKTIVLGVIG…ADLKKDLNIE (135 aa). Adenosylcob(III)alamin contacts are provided by residues 13–17, His16, 61–63, and 93–97; these read SDCHA, SSL, and NIVVG.

It belongs to the methylaspartate mutase GlmS subunit family. Heterotetramer composed of 2 epsilon subunits (GlmE) and 2 sigma subunits (GlmS). GlmE exists as a homodimer and GlmS as a monomer. Requires adenosylcob(III)alamin as cofactor.

It carries out the reaction (2S,3S)-3-methyl-L-aspartate = L-glutamate. The protein operates within amino-acid degradation; L-glutamate degradation via mesaconate pathway; acetate and pyruvate from L-glutamate: step 1/4. Competitively inhibited by (2S,4S)-4-fluoroglutamate, 2-methyleneglutarate, (2R,3RS)-3-fluoroglutamate and (S)-3-methylitaconate. Its function is as follows. Catalyzes the carbon skeleton rearrangement of L-glutamate to L-threo-3-methylaspartate ((2S,3S)-3-methylaspartate). In Clostridium cochlearium, this protein is Glutamate mutase sigma subunit.